The primary structure comprises 1061 residues: RecBCD enzyme subunit RecC (1061 aa).

Belongs to the RecC family. In terms of assembly, heterotrimer of RecB, RecC and RecD. All subunits contribute to DNA-binding.

Its function is as follows. A helicase/nuclease that prepares dsDNA breaks (DSB) for recombinational DNA repair. Binds to DSBs and unwinds DNA via a highly rapid and processive ATP-dependent bidirectional helicase activity. Unwinds dsDNA until it encounters a Chi (crossover hotspot instigator) sequence from the 3' direction. Cuts ssDNA a few nucleotides 3' to the Chi site. The properties and activities of the enzyme are changed at Chi. The Chi-altered holoenzyme produces a long 3'-ssDNA overhang and facilitates RecA-binding to the ssDNA for homologous DNA recombination and repair. Holoenzyme degrades any linearized DNA that is unable to undergo homologous recombination. In the holoenzyme this subunit recognizes the wild-type Chi sequence, and when added to isolated RecB increases its ATP-dependent helicase processivity. The chain is RecBCD enzyme subunit RecC from Buchnera aphidicola subsp. Schizaphis graminum (strain Sg).